We begin with the raw amino-acid sequence, 136 residues long: Holo-[acyl-carrier-protein] synthase (136 aa).

Aspartate 8 and glutamate 57 together coordinate Mg(2+).

Belongs to the P-Pant transferase superfamily. AcpS family. Mg(2+) is required as a cofactor.

It localises to the cytoplasm. It carries out the reaction apo-[ACP] + CoA = holo-[ACP] + adenosine 3',5'-bisphosphate + H(+). Transfers the 4'-phosphopantetheine moiety from coenzyme A to a Ser of acyl-carrier-protein. This chain is Holo-[acyl-carrier-protein] synthase, found in Methylorubrum extorquens (strain PA1) (Methylobacterium extorquens).